The following is a 70-amino-acid chain: Large ribosomal subunit protein bL31 (70 aa).

4 residues coordinate Zn(2+): Cys-16, Cys-18, Cys-37, and Cys-40.

It belongs to the bacterial ribosomal protein bL31 family. Type A subfamily. Part of the 50S ribosomal subunit. Requires Zn(2+) as cofactor.

Functionally, binds the 23S rRNA. In Shewanella denitrificans (strain OS217 / ATCC BAA-1090 / DSM 15013), this protein is Large ribosomal subunit protein bL31.